A 486-amino-acid polypeptide reads, in one-letter code: Ribulose bisphosphate carboxylase large chain 1 (486 aa).

Substrate is bound by residues Asn125 and Thr175. The active-site Proton acceptor is the Lys177. Lys179 contacts substrate. Mg(2+) contacts are provided by Lys203, Asp205, and Glu206. At Lys203 the chain carries N6-carboxylysine. His295 functions as the Proton acceptor in the catalytic mechanism. Residues Arg296, His328, and Ser380 each coordinate substrate.

It belongs to the RuBisCO large chain family. Type I subfamily. In terms of assembly, heterohexadecamer of 8 large chains and 8 small chains. Mg(2+) serves as cofactor.

The enzyme catalyses 2 (2R)-3-phosphoglycerate + 2 H(+) = D-ribulose 1,5-bisphosphate + CO2 + H2O. It carries out the reaction D-ribulose 1,5-bisphosphate + O2 = 2-phosphoglycolate + (2R)-3-phosphoglycerate + 2 H(+). Functionally, ruBisCO catalyzes two reactions: the carboxylation of D-ribulose 1,5-bisphosphate, the primary event in carbon dioxide fixation, as well as the oxidative fragmentation of the pentose substrate. Both reactions occur simultaneously and in competition at the same active site. This is Ribulose bisphosphate carboxylase large chain 1 from Cereibacter sphaeroides (strain ATCC 17025 / ATH 2.4.3) (Rhodobacter sphaeroides).